Consider the following 62-residue polypeptide: Ferredoxin-2 (62 aa).

2 4Fe-4S ferredoxin-type domains span residues 2–28 and 29–62; these read AHRI…SAGD and SIYV…IIKV. Residues cysteine 9, cysteine 12, cysteine 15, cysteine 19, cysteine 38, cysteine 41, cysteine 50, and cysteine 54 each coordinate [4Fe-4S] cluster.

[4Fe-4S] cluster is required as a cofactor.

In terms of biological role, ferredoxins are iron-sulfur proteins that transfer electrons in a wide variety of metabolic reactions. In Chlorobaculum tepidum (strain ATCC 49652 / DSM 12025 / NBRC 103806 / TLS) (Chlorobium tepidum), this protein is Ferredoxin-2.